We begin with the raw amino-acid sequence, 246 residues long: Small ribosomal subunit protein uS2 (246 aa).

The disordered stretch occupies residues 226–246; that stretch reads QGEEEAEVAEETAPETETTTA. Residues 229 to 239 are compositionally biased toward acidic residues; the sequence is EEAEVAEETAP.

It belongs to the universal ribosomal protein uS2 family. As to quaternary structure, part of the 30S ribosomal subunit. Interacts with BrxC.

The sequence is that of Small ribosomal subunit protein uS2 (rpsB) from Bacillus subtilis (strain 168).